The sequence spans 114 residues: Putative antiporter subunit mnhC2 (114 aa).

The next 3 helical transmembrane spans lie at 3–23 (LILL…ILSI), 25–45 (LIRI…IIMS), and 72–92 (AIVL…LVLI).

This sequence belongs to the CPA3 antiporters (TC 2.A.63) subunit C family. May form a heterooligomeric complex that consists of seven subunits: mnhA2, mnhB2, mnhC2, mnhD2, mnhE2, mnhF2 and mnhG2.

The protein localises to the cell membrane. This is Putative antiporter subunit mnhC2 (mnhC2) from Staphylococcus epidermidis (strain ATCC 12228 / FDA PCI 1200).